The sequence spans 345 residues: MTLSLQDFDYDLPPDLIAQAPLAERSASRLLVVDGDVLADRRFVDLPDFIRPGDLLVFNDTRVLHARLFGVKATGGQVEVLVERPIGAHEALAQIRASKSPKPGSTLRLADAVDVTVLGRSGEFFHLRFPDDENVVDVLERYGKLPLPPYIQRAAGDADEARYQTVFARAPGSVAAPTAGLHFDDAVLDRLRARGAGCAWVTLHVGAGTFQPVRVDDLAQHRMHSERYVIPQETVEAIARTRANGGRVVAVGTTSMRALEAAAQAGPLAAGSGETDIFILPGFRFRVADMLVTNFHLPKSTLLMLVSAFSGTDVIRRAYAHAVASRYRFFSYGDAMLLTRNDHAI.

It belongs to the QueA family. In terms of assembly, monomer.

Its subcellular location is the cytoplasm. It catalyses the reaction 7-aminomethyl-7-carbaguanosine(34) in tRNA + S-adenosyl-L-methionine = epoxyqueuosine(34) in tRNA + adenine + L-methionine + 2 H(+). Its pathway is tRNA modification; tRNA-queuosine biosynthesis. Its function is as follows. Transfers and isomerizes the ribose moiety from AdoMet to the 7-aminomethyl group of 7-deazaguanine (preQ1-tRNA) to give epoxyqueuosine (oQ-tRNA). The protein is S-adenosylmethionine:tRNA ribosyltransferase-isomerase of Azoarcus sp. (strain BH72).